The primary structure comprises 207 residues: Large ribosomal subunit protein bL25 (207 aa).

The tract at residues 182–207 (QDLGDESVQEEQAAESAEGESEGSED) is disordered.

It belongs to the bacterial ribosomal protein bL25 family. CTC subfamily. As to quaternary structure, part of the 50S ribosomal subunit; part of the 5S rRNA/L5/L18/L25 subcomplex. Contacts the 5S rRNA. Binds to the 5S rRNA independently of L5 and L18.

In terms of biological role, this is one of the proteins that binds to the 5S RNA in the ribosome where it forms part of the central protuberance. In Micrococcus luteus (strain ATCC 4698 / DSM 20030 / JCM 1464 / CCM 169 / CCUG 5858 / IAM 1056 / NBRC 3333 / NCIMB 9278 / NCTC 2665 / VKM Ac-2230) (Micrococcus lysodeikticus), this protein is Large ribosomal subunit protein bL25.